Here is a 105-residue protein sequence, read N- to C-terminus: Large ribosomal subunit protein uL24 (105 aa).

This sequence belongs to the universal ribosomal protein uL24 family. As to quaternary structure, part of the 50S ribosomal subunit.

Functionally, one of two assembly initiator proteins, it binds directly to the 5'-end of the 23S rRNA, where it nucleates assembly of the 50S subunit. One of the proteins that surrounds the polypeptide exit tunnel on the outside of the subunit. In Mycobacterium leprae (strain Br4923), this protein is Large ribosomal subunit protein uL24.